The primary structure comprises 409 residues: Multifunctional CCA protein (409 aa).

The ATP site is built by G8 and R11. 2 residues coordinate CTP: G8 and R11. Mg(2+)-binding residues include D21 and D23. 3 residues coordinate ATP: R91, R137, and R140. CTP contacts are provided by R91, R137, and R140. Residues 228–329 (TGVHVLSVLE…LELLQSFDVY (102 aa)) form the HD domain.

It belongs to the tRNA nucleotidyltransferase/poly(A) polymerase family. Bacterial CCA-adding enzyme type 1 subfamily. As to quaternary structure, monomer. Can also form homodimers and oligomers. Requires Mg(2+) as cofactor. The cofactor is Ni(2+).

The catalysed reaction is a tRNA precursor + 2 CTP + ATP = a tRNA with a 3' CCA end + 3 diphosphate. It catalyses the reaction a tRNA with a 3' CCA end + 2 CTP + ATP = a tRNA with a 3' CCACCA end + 3 diphosphate. In terms of biological role, catalyzes the addition and repair of the essential 3'-terminal CCA sequence in tRNAs without using a nucleic acid template. Adds these three nucleotides in the order of C, C, and A to the tRNA nucleotide-73, using CTP and ATP as substrates and producing inorganic pyrophosphate. tRNA 3'-terminal CCA addition is required both for tRNA processing and repair. Also involved in tRNA surveillance by mediating tandem CCA addition to generate a CCACCA at the 3' terminus of unstable tRNAs. While stable tRNAs receive only 3'-terminal CCA, unstable tRNAs are marked with CCACCA and rapidly degraded. The polypeptide is Multifunctional CCA protein (Pseudomonas savastanoi pv. phaseolicola (strain 1448A / Race 6) (Pseudomonas syringae pv. phaseolicola (strain 1448A / Race 6))).